The following is a 398-amino-acid chain: Phosphoglycerate kinase (398 aa).

Substrate contacts are provided by residues 21–23 (DFN), arginine 36, 59–62 (HFGR), arginine 117, and arginine 150. Residues lysine 200, glutamate 321, and 351 to 354 (GGDS) contribute to the ATP site.

Belongs to the phosphoglycerate kinase family. In terms of assembly, monomer.

Its subcellular location is the cytoplasm. The catalysed reaction is (2R)-3-phosphoglycerate + ATP = (2R)-3-phospho-glyceroyl phosphate + ADP. It functions in the pathway carbohydrate degradation; glycolysis; pyruvate from D-glyceraldehyde 3-phosphate: step 2/5. The protein is Phosphoglycerate kinase of Wolbachia sp. subsp. Drosophila simulans (strain wRi).